Consider the following 137-residue polypeptide: uncharacterized protein (137 aa).

This is an uncharacterized protein from Archaeoglobus fulgidus (strain ATCC 49558 / DSM 4304 / JCM 9628 / NBRC 100126 / VC-16).